A 339-amino-acid chain; its full sequence is Small ribosomal subunit protein mS27 (339 aa).

The N-terminal 37 residues, 1–37, are a transit peptide targeting the mitochondrion; it reads MGTITVVINEGPILLIRALHRATTNKKMFRSTVWRRF.

It belongs to the mitochondrion-specific ribosomal protein mS27 family. In terms of assembly, component of the mitochondrial small ribosomal subunit (mt-SSU). Mature yeast 74S mitochondrial ribosomes consist of a small (37S) and a large (54S) subunit. The 37S small subunit contains a 15S ribosomal RNA (15S mt-rRNA) and 34 different proteins. The 54S large subunit contains a 21S rRNA (21S mt-rRNA) and 46 different proteins.

The protein resides in the mitochondrion. Functionally, component of the mitochondrial ribosome (mitoribosome), a dedicated translation machinery responsible for the synthesis of mitochondrial genome-encoded proteins, including at least some of the essential transmembrane subunits of the mitochondrial respiratory chain. The mitoribosomes are attached to the mitochondrial inner membrane and translation products are cotranslationally integrated into the membrane. The polypeptide is Small ribosomal subunit protein mS27 (MRP13) (Saccharomyces cerevisiae (strain ATCC 204508 / S288c) (Baker's yeast)).